Here is a 364-residue protein sequence, read N- to C-terminus: Probable protein phosphatase methylesterase 1 (364 aa).

The segment at 1–53 (MSDDKLDTLPDLQSETSHVTTPHRQNDLLRQAVTHGRPPPVPSTSTSGKKREM) is disordered. Residues 11-23 (DLQSETSHVTTPH) show a composition bias toward polar residues. Residues Ser164, Asp190, and His316 contribute to the active site.

This sequence belongs to the AB hydrolase superfamily.

It carries out the reaction [phosphatase 2A protein]-C-terminal L-leucine methyl ester + H2O = [phosphatase 2A protein]-C-terminal L-leucine + methanol + H(+). Demethylates proteins that have been reversibly carboxymethylated. This Caenorhabditis elegans protein is Probable protein phosphatase methylesterase 1.